The following is a 278-amino-acid chain: NAD kinase (278 aa).

Asp56 acts as the Proton acceptor in catalysis. Residues 56 to 57, 132 to 133, Arg158, Asp160, and 171 to 176 contribute to the NAD(+) site; these read DG, NE, and TAYNKS.

The protein belongs to the NAD kinase family. It depends on a divalent metal cation as a cofactor.

It is found in the cytoplasm. The enzyme catalyses NAD(+) + ATP = ADP + NADP(+) + H(+). In terms of biological role, involved in the regulation of the intracellular balance of NAD and NADP, and is a key enzyme in the biosynthesis of NADP. Catalyzes specifically the phosphorylation on 2'-hydroxyl of the adenosine moiety of NAD to yield NADP. This is NAD kinase from Streptococcus agalactiae serotype III (strain NEM316).